The chain runs to 203 residues: Proteasome subunit beta 2 (203 aa).

Positions 1–9 (MGEEFQVGA) are cleaved as a propeptide — removed in mature form; by autocatalysis. T10 serves as the catalytic Nucleophile.

It belongs to the peptidase T1B family. In terms of assembly, the 20S proteasome core is composed of 14 alpha and 14 beta subunits that assemble into four stacked heptameric rings, resulting in a barrel-shaped structure. The two inner rings, each composed of seven catalytic beta subunits, are sandwiched by two outer rings, each composed of seven alpha subunits. The catalytic chamber with the active sites is on the inside of the barrel. Has a gated structure, the ends of the cylinder being occluded by the N-termini of the alpha-subunits. Is capped at one or both ends by the proteasome regulatory ATPase, PAN.

The protein localises to the cytoplasm. It carries out the reaction Cleavage of peptide bonds with very broad specificity.. With respect to regulation, the formation of the proteasomal ATPase PAN-20S proteasome complex, via the docking of the C-termini of PAN into the intersubunit pockets in the alpha-rings, triggers opening of the gate for substrate entry. Interconversion between the open-gate and close-gate conformations leads to a dynamic regulation of the 20S proteasome proteolysis activity. In terms of biological role, component of the proteasome core, a large protease complex with broad specificity involved in protein degradation. In Pyrobaculum neutrophilum (strain DSM 2338 / JCM 9278 / NBRC 100436 / V24Sta) (Thermoproteus neutrophilus), this protein is Proteasome subunit beta 2.